The following is a 545-amino-acid chain: Ribosomal protein uS12 methylthiotransferase RimO (545 aa).

The region spanning 7-129 (RRVALVTLGC…IGEHLDAVLG (123 aa)) is the MTTase N-terminal domain. [4Fe-4S] cluster contacts are provided by cysteine 16, cysteine 52, cysteine 92, cysteine 197, cysteine 201, and cysteine 204. One can recognise a Radical SAM core domain in the interval 183–414 (LTAGPVAALK…DLVEQLTATR (232 aa)). The TRAM domain maps to 416 to 510 (QERIGSRVQV…GVDLVAEFTA (95 aa)). 2 disordered regions span residues 454-486 (LPGP…QPGV) and 516-545 (RPSA…ADGT). Positions 455-464 (PGPAGAAAGP) are enriched in low complexity.

Belongs to the methylthiotransferase family. RimO subfamily. Requires [4Fe-4S] cluster as cofactor.

The protein resides in the cytoplasm. The enzyme catalyses L-aspartate(89)-[ribosomal protein uS12]-hydrogen + (sulfur carrier)-SH + AH2 + 2 S-adenosyl-L-methionine = 3-methylsulfanyl-L-aspartate(89)-[ribosomal protein uS12]-hydrogen + (sulfur carrier)-H + 5'-deoxyadenosine + L-methionine + A + S-adenosyl-L-homocysteine + 2 H(+). Its function is as follows. Catalyzes the methylthiolation of an aspartic acid residue of ribosomal protein uS12. In Frankia alni (strain DSM 45986 / CECT 9034 / ACN14a), this protein is Ribosomal protein uS12 methylthiotransferase RimO.